The chain runs to 354 residues: Uroporphyrinogen decarboxylase (354 aa).

Substrate is bound by residues 27–31, D77, Y154, S209, and H327; that span reads RQAGR.

Belongs to the uroporphyrinogen decarboxylase family. As to quaternary structure, homodimer.

Its subcellular location is the cytoplasm. It catalyses the reaction uroporphyrinogen III + 4 H(+) = coproporphyrinogen III + 4 CO2. It functions in the pathway porphyrin-containing compound metabolism; protoporphyrin-IX biosynthesis; coproporphyrinogen-III from 5-aminolevulinate: step 4/4. In terms of biological role, catalyzes the decarboxylation of four acetate groups of uroporphyrinogen-III to yield coproporphyrinogen-III. This is Uroporphyrinogen decarboxylase from Pseudomonas savastanoi pv. phaseolicola (strain 1448A / Race 6) (Pseudomonas syringae pv. phaseolicola (strain 1448A / Race 6)).